The chain runs to 709 residues: Polyribonucleotide nucleotidyltransferase (709 aa).

Positions 486 and 492 each coordinate Mg(2+). Residues 553-612 (PRIHTIKINADKIKDVIGKGGSVIRALTEETGTTIEIEDDGTVKIAATSGEQAKQAIARI) enclose the KH domain. Positions 622 to 690 (GRIYNGKVTR…RQGRIRLSMK (69 aa)) constitute an S1 motif domain. The disordered stretch occupies residues 690–709 (KEAQATQQEAAETSSEDPAN). Over residues 691–702 (EAQATQQEAAET) the composition is skewed to low complexity.

This sequence belongs to the polyribonucleotide nucleotidyltransferase family. Component of the RNA degradosome, which is a multiprotein complex involved in RNA processing and mRNA degradation. Mg(2+) serves as cofactor.

The protein resides in the cytoplasm. The catalysed reaction is RNA(n+1) + phosphate = RNA(n) + a ribonucleoside 5'-diphosphate. Involved in mRNA degradation. Catalyzes the phosphorolysis of single-stranded polyribonucleotides processively in the 3'- to 5'-direction. This chain is Polyribonucleotide nucleotidyltransferase, found in Proteus mirabilis (strain HI4320).